Consider the following 470-residue polypeptide: ATP synthase subunit beta (470 aa).

156–163 (GGAGVGKT) is a binding site for ATP.

This sequence belongs to the ATPase alpha/beta chains family. In terms of assembly, F-type ATPases have 2 components, CF(1) - the catalytic core - and CF(0) - the membrane proton channel. CF(1) has five subunits: alpha(3), beta(3), gamma(1), delta(1), epsilon(1). CF(0) has three main subunits: a(1), b(2) and c(9-12). The alpha and beta chains form an alternating ring which encloses part of the gamma chain. CF(1) is attached to CF(0) by a central stalk formed by the gamma and epsilon chains, while a peripheral stalk is formed by the delta and b chains.

The protein resides in the cell inner membrane. The enzyme catalyses ATP + H2O + 4 H(+)(in) = ADP + phosphate + 5 H(+)(out). Produces ATP from ADP in the presence of a proton gradient across the membrane. The catalytic sites are hosted primarily by the beta subunits. The sequence is that of ATP synthase subunit beta from Nitratidesulfovibrio vulgaris (strain ATCC 29579 / DSM 644 / CCUG 34227 / NCIMB 8303 / VKM B-1760 / Hildenborough) (Desulfovibrio vulgaris).